The sequence spans 1103 residues: Trophozoite exported protein 1 (1103 aa).

A coiled-coil region spans residues 173–212 (KKEKIEDKKYEQDDEEENEEEEEEEEEEEGEEENKEDEEF). Disordered regions lie at residues 178–210 (EDKKYEQDDEEENEEEEEEEEEEEGEEENKEDE) and 271–301 (KSYSGDEKINTSDNAKSCSGDEKVITSDNGK). Residues 184-210 (QDDEEENEEEEEEEEEEEGEEENKEDE) are compositionally biased toward acidic residues. Residues 271-280 (KSYSGDEKIN) are compositionally biased toward basic and acidic residues. Coiled coils occupy residues 304–330 (DYVKNESEEQEEKENMLNNKKRSLECN) and 478–518 (YKNY…KLNN). Residues 544 to 601 (YFDEGENPYNRNNKNYRTDNKNSDDNNNNNNYYYNNYNSDDNYNSEDNEYNNGNYRFR) form a disordered region. Residues 568 to 585 (DNNNNNNYYYNNYNSDDN) show a composition bias toward low complexity. 3 coiled-coil regions span residues 650–791 (FRNL…LSGI), 819–932 (DEKY…IYKK), and 993–1030 (NKKLIGHCQDLEKENSTLQNKLSNEIKNSKMLSKNLSK). Residues 1050–1089 (CSVCMENFRNYIIIKCGHIYCNNCIFNNLKTRNRKCPQCK) form an RING-type zinc finger.

It localises to the host cell membrane. This is Trophozoite exported protein 1 from Plasmodium falciparum (isolate 3D7).